The following is a 105-amino-acid chain: Large ribosomal subunit protein uL24 (105 aa).

Belongs to the universal ribosomal protein uL24 family. As to quaternary structure, part of the 50S ribosomal subunit.

In terms of biological role, one of two assembly initiator proteins, it binds directly to the 5'-end of the 23S rRNA, where it nucleates assembly of the 50S subunit. One of the proteins that surrounds the polypeptide exit tunnel on the outside of the subunit. This Sphingopyxis alaskensis (strain DSM 13593 / LMG 18877 / RB2256) (Sphingomonas alaskensis) protein is Large ribosomal subunit protein uL24.